The following is a 79-amino-acid chain: ESX secretion system protein YukD (79 aa).

This sequence belongs to the EsaB family.

Required for YukE secretion. Probable component or regulator of the ESX/ESAT-6-like secretion system (BsEss). The polypeptide is ESX secretion system protein YukD (yukD) (Bacillus subtilis (strain 168)).